The primary structure comprises 167 residues: Interferon gamma (167 aa).

An N-terminal signal peptide occupies residues 1–23 (MNYTGYLLAFQLCIILGSSSCYC). Gln24 is modified (pyrrolidone carboxylic acid). Asn39 and Asn105 each carry an N-linked (GlcNAc...) asparagine glycan. The interval 148 to 167 (SNLRKRKRSQSTFHGRRASI) is disordered. Positions 149–167 (NLRKRKRSQSTFHGRRASI) are enriched in basic residues.

This sequence belongs to the type II (or gamma) interferon family. As to quaternary structure, homodimer. Interacts with IFNGR1 (via extracellular domain); this interaction promotes IFNGR1 dimerization. In terms of tissue distribution, released primarily from activated T lymphocytes.

It localises to the secreted. In terms of biological role, type II interferon produced by immune cells such as T-cells and NK cells that plays crucial roles in antimicrobial, antiviral, and antitumor responses by activating effector immune cells and enhancing antigen presentation. Primarily signals through the JAK-STAT pathway after interaction with its receptor IFNGR1 to affect gene regulation. Upon IFNG binding, IFNGR1 intracellular domain opens out to allow association of downstream signaling components JAK2, JAK1 and STAT1, leading to STAT1 activation, nuclear translocation and transcription of IFNG-regulated genes. Many of the induced genes are transcription factors such as IRF1 that are able to further drive regulation of a next wave of transcription. Plays a role in class I antigen presentation pathway by inducing a replacement of catalytic proteasome subunits with immunoproteasome subunits. In turn, increases the quantity, quality, and repertoire of peptides for class I MHC loading. Increases the efficiency of peptide generation also by inducing the expression of activator PA28 that associates with the proteasome and alters its proteolytic cleavage preference. Up-regulates as well MHC II complexes on the cell surface by promoting expression of several key molecules such as cathepsins B/CTSB, H/CTSH, and L/CTSL. Participates in the regulation of hematopoietic stem cells during development and under homeostatic conditions by affecting their development, quiescence, and differentiation. In Dasypus novemcinctus (Nine-banded armadillo), this protein is Interferon gamma (IFNG).